The following is a 1116-amino-acid chain: Phosphatidylinositol 4-kinase beta 2 (1116 aa).

Positions 1–143 constitute a PIK helical domain; the sequence is MQMAQFLSLV…SRIQEKCQIA (143 aa). 8 repeat units span residues 210-229, 242-261, 264-283, 286-304, 307-326, 329-348, 351-370, and 378-396. The tract at residues 210 to 507 is 11 X 20 AA approximate repeats (PPC); that stretch reads ADDNKIFKRL…FRDRDRSVED (298 aa). Residues 394–404 are compositionally biased toward basic and acidic residues; sequence EKRNGNERNET. The disordered stretch occupies residues 394–417; sequence EKRNGNERNETDETVYTDETSGED. Residues 405–415 are compositionally biased toward acidic residues; it reads DETVYTDETSG. Copy 9 of the repeat occupies 418 to 436; sequence NGREGFFKKLFKEKFEDKP. Phosphoserine occurs at positions 447 and 452. 2 consecutive repeat copies span residues 452–470 and 488–507. Disordered regions lie at residues 515-540 and 794-813; these read KYKEKCPGSPKPQNNTPSKKPPLPNN and GEAPPGLPLKGAGQDSSDAQ. The PI3K/PI4K catalytic domain maps to 830 to 1101; that stretch reads EFWEGKRLRI…LISSSLDAWR (272 aa). The interval 836–842 is G-loop; sequence RLRIRKD. The tract at residues 964–972 is catalytic loop; it reads QIKDRHNGN. Residues 983–1007 are activation loop; the sequence is HIDFGFMLSNSPGGVNFESAPFKLT.

The protein belongs to the PI3/PI4-kinase family. Type III PI4K subfamily.

It is found in the cell membrane. The protein localises to the golgi apparatus. The protein resides in the trans-Golgi network. It localises to the cytoplasmic vesicle membrane. It catalyses the reaction a 1,2-diacyl-sn-glycero-3-phospho-(1D-myo-inositol) + ATP = a 1,2-diacyl-sn-glycero-3-phospho-(1D-myo-inositol 4-phosphate) + ADP + H(+). Its function is as follows. Acts on phosphatidylinositol (PtdIns) in the first committed step in the production of the second messenger inositol-1,4,5-trisphosphate. Necessary for proper organization of the trans-Golgi network (TGN) and post-Golgi secretion in root hairs. Together with PI4KB1, required during polarized root hair expansion and pollen tube elongation. Functions redundantly with PI4KB1 upstream of the cold response phosphoinositide-dependent phospholipase C (PI-PLC) pathway. The protein is Phosphatidylinositol 4-kinase beta 2 (PI4KB2) of Arabidopsis thaliana (Mouse-ear cress).